A 315-amino-acid polypeptide reads, in one-letter code: Ribosomal RNA small subunit methyltransferase H (315 aa).

Residues 35–37, Asp-55, Phe-79, Asp-101, and Gln-108 contribute to the S-adenosyl-L-methionine site; that span reads GGH.

The protein belongs to the methyltransferase superfamily. RsmH family.

The protein localises to the cytoplasm. It carries out the reaction cytidine(1402) in 16S rRNA + S-adenosyl-L-methionine = N(4)-methylcytidine(1402) in 16S rRNA + S-adenosyl-L-homocysteine + H(+). Functionally, specifically methylates the N4 position of cytidine in position 1402 (C1402) of 16S rRNA. In Photobacterium profundum (strain SS9), this protein is Ribosomal RNA small subunit methyltransferase H.